The primary structure comprises 404 residues: uncharacterized protein (404 aa).

2 helical membrane passes run 35–55 (ILFS…FTFL) and 92–112 (EDIW…ISSI).

It localises to the membrane. This is an uncharacterized protein from Saccharomyces cerevisiae (strain ATCC 204508 / S288c) (Baker's yeast).